A 176-amino-acid chain; its full sequence is ATP-dependent protease subunit HslV (176 aa).

Thr2 is an active-site residue. Residues Gly157, Cys160, and Thr163 each coordinate Na(+).

This sequence belongs to the peptidase T1B family. HslV subfamily. In terms of assembly, a double ring-shaped homohexamer of HslV is capped on each side by a ring-shaped HslU homohexamer. The assembly of the HslU/HslV complex is dependent on binding of ATP.

The protein localises to the cytoplasm. The enzyme catalyses ATP-dependent cleavage of peptide bonds with broad specificity.. With respect to regulation, allosterically activated by HslU binding. Its function is as follows. Protease subunit of a proteasome-like degradation complex believed to be a general protein degrading machinery. This Escherichia coli O139:H28 (strain E24377A / ETEC) protein is ATP-dependent protease subunit HslV.